A 425-amino-acid chain; its full sequence is 5-aminovalerate aminotransferase DavT (425 aa).

Residues 112 to 113 (GS), tyrosine 139, and 240 to 243 (DEVQ) each bind pyridoxal 5'-phosphate. Lysine 269 bears the N6-(pyridoxal phosphate)lysine mark. Residue threonine 298 participates in pyridoxal 5'-phosphate binding.

It belongs to the class-III pyridoxal-phosphate-dependent aminotransferase family. Requires pyridoxal 5'-phosphate as cofactor.

It catalyses the reaction 5-aminopentanoate + 2-oxoglutarate = 5-oxopentanoate + L-glutamate. Functionally, catalyzes the conversion of 5-aminovalerate to 5-oxopentanoate. The chain is 5-aminovalerate aminotransferase DavT (davT) from Pseudomonas putida (strain ATCC 47054 / DSM 6125 / CFBP 8728 / NCIMB 11950 / KT2440).